A 136-amino-acid polypeptide reads, in one-letter code: Large-conductance mechanosensitive channel (136 aa).

2 helical membrane passes run 9-29 (AFASRGNVIDMAVGIIIGAAF) and 79-99 (IQTVIDFTIIAFAIFMGLKAI).

The protein belongs to the MscL family. Homopentamer.

It localises to the cell inner membrane. Functionally, channel that opens in response to stretch forces in the membrane lipid bilayer. May participate in the regulation of osmotic pressure changes within the cell. The protein is Large-conductance mechanosensitive channel of Shewanella sp. (strain W3-18-1).